A 294-amino-acid chain; its full sequence is UDP-3-O-acyl-N-acetylglucosamine deacetylase (294 aa).

His-75, His-232, and Asp-236 together coordinate Zn(2+). The Proton donor role is filled by His-259.

The protein belongs to the LpxC family. It depends on Zn(2+) as a cofactor.

The enzyme catalyses a UDP-3-O-[(3R)-3-hydroxyacyl]-N-acetyl-alpha-D-glucosamine + H2O = a UDP-3-O-[(3R)-3-hydroxyacyl]-alpha-D-glucosamine + acetate. It functions in the pathway glycolipid biosynthesis; lipid IV(A) biosynthesis; lipid IV(A) from (3R)-3-hydroxytetradecanoyl-[acyl-carrier-protein] and UDP-N-acetyl-alpha-D-glucosamine: step 2/6. Catalyzes the hydrolysis of UDP-3-O-myristoyl-N-acetylglucosamine to form UDP-3-O-myristoylglucosamine and acetate, the committed step in lipid A biosynthesis. This Campylobacter jejuni (strain RM1221) protein is UDP-3-O-acyl-N-acetylglucosamine deacetylase.